Consider the following 455-residue polypeptide: Ribosomal protein uS12 methylthiotransferase RimO (455 aa).

One can recognise an MTTase N-terminal domain in the interval 1–114 (MKYHIVTLGC…INALVGQLER (114 aa)). [4Fe-4S] cluster-binding residues include cysteine 10, cysteine 46, cysteine 78, cysteine 166, cysteine 170, and cysteine 173. Residues 152-383 (THQTPSAYLK…MRLQQTISYT (232 aa)) form the Radical SAM core domain. The TRAM domain maps to 386–455 (QRWVGRTIKV…AYDLWGEALS (70 aa)).

Belongs to the methylthiotransferase family. RimO subfamily. Requires [4Fe-4S] cluster as cofactor.

Its subcellular location is the cytoplasm. The catalysed reaction is L-aspartate(89)-[ribosomal protein uS12]-hydrogen + (sulfur carrier)-SH + AH2 + 2 S-adenosyl-L-methionine = 3-methylsulfanyl-L-aspartate(89)-[ribosomal protein uS12]-hydrogen + (sulfur carrier)-H + 5'-deoxyadenosine + L-methionine + A + S-adenosyl-L-homocysteine + 2 H(+). In terms of biological role, catalyzes the methylthiolation of an aspartic acid residue of ribosomal protein uS12. The protein is Ribosomal protein uS12 methylthiotransferase RimO of Chloroflexus aurantiacus (strain ATCC 29366 / DSM 635 / J-10-fl).